A 501-amino-acid polypeptide reads, in one-letter code: 2,3-bisphosphoglycerate-independent phosphoglycerate mutase (501 aa).

Residues aspartate 10 and serine 60 each coordinate Mn(2+). Serine 60 serves as the catalytic Phosphoserine intermediate. Residues histidine 121, 151–152, arginine 182, arginine 188, 256–259, and lysine 329 contribute to the substrate site; these read RD and RPDR. Aspartate 394, histidine 398, aspartate 435, histidine 436, and histidine 453 together coordinate Mn(2+).

Belongs to the BPG-independent phosphoglycerate mutase family. Monomer. Requires Mn(2+) as cofactor.

It carries out the reaction (2R)-2-phosphoglycerate = (2R)-3-phosphoglycerate. It participates in carbohydrate degradation; glycolysis; pyruvate from D-glyceraldehyde 3-phosphate: step 3/5. Functionally, catalyzes the interconversion of 2-phosphoglycerate and 3-phosphoglycerate. The protein is 2,3-bisphosphoglycerate-independent phosphoglycerate mutase of Mycoplasmopsis synoviae (strain 53) (Mycoplasma synoviae).